The chain runs to 236 residues: Aquaporin Z (236 aa).

2 helical membrane passes run Phe-12 to Val-32 and Ile-37 to Val-57. Residues Asn-66 to Ala-68 carry the NPA 1 motif. 3 helical membrane passes run Val-92 to Phe-112, Ala-136 to Thr-156, and Gly-163 to Val-183. The short motif at Asn-189–Ala-191 is the NPA 2 element. A helical transmembrane segment spans residues Ala-197 to Ala-217.

The protein belongs to the MIP/aquaporin (TC 1.A.8) family. In terms of assembly, homotetramer.

The protein resides in the cell inner membrane. The catalysed reaction is H2O(in) = H2O(out). In terms of biological role, channel that permits osmotically driven movement of water in both directions. It is involved in the osmoregulation and in the maintenance of cell turgor during volume expansion in rapidly growing cells. It mediates rapid entry or exit of water in response to abrupt changes in osmolarity. This chain is Aquaporin Z, found in Bordetella bronchiseptica (strain ATCC BAA-588 / NCTC 13252 / RB50) (Alcaligenes bronchisepticus).